The primary structure comprises 244 residues: NAD(P)H-quinone oxidoreductase subunit K (244 aa).

[4Fe-4S] cluster contacts are provided by C60, C61, C125, and C156.

This sequence belongs to the complex I 20 kDa subunit family. In terms of assembly, NDH-1 can be composed of about 15 different subunits; different subcomplexes with different compositions have been identified which probably have different functions. Requires [4Fe-4S] cluster as cofactor.

The protein resides in the cellular thylakoid membrane. The catalysed reaction is a plastoquinone + NADH + (n+1) H(+)(in) = a plastoquinol + NAD(+) + n H(+)(out). The enzyme catalyses a plastoquinone + NADPH + (n+1) H(+)(in) = a plastoquinol + NADP(+) + n H(+)(out). In terms of biological role, NDH-1 shuttles electrons from an unknown electron donor, via FMN and iron-sulfur (Fe-S) centers, to quinones in the respiratory and/or the photosynthetic chain. The immediate electron acceptor for the enzyme in this species is believed to be plastoquinone. Couples the redox reaction to proton translocation, and thus conserves the redox energy in a proton gradient. Cyanobacterial NDH-1 also plays a role in inorganic carbon-concentration. In Prochlorococcus marinus (strain MIT 9515), this protein is NAD(P)H-quinone oxidoreductase subunit K.